Reading from the N-terminus, the 338-residue chain is Trace amine-associated receptor 1 (338 aa).

Residues 1 to 24 (MPFCHNIINISCVKNNWSNDVRAS) are Extracellular-facing. Disulfide bonds link cysteine 4-cysteine 177, cysteine 12-cysteine 87, and cysteine 95-cysteine 181. N-linked (GlcNAc...) asparagine glycans are attached at residues asparagine 9 and asparagine 16. Residues 25–45 (LYSLMALIILTTLVGNLIVIV) form a helical membrane-spanning segment. The Cytoplasmic segment spans residues 46–58 (SISHFKQLHTPTN). Residues 59-79 (WLIHSMATVDFLLGCLVMPYS) traverse the membrane as a helical segment. The Extracellular portion of the chain corresponds to 80-97 (MVRSAEHCWYFGEVFCKI). A helical transmembrane segment spans residues 98-118 (HTSTDIMLSSASIFHLSFISI). Aspartate 102 lines the 2-phenylethylamine pocket. Residues 119-135 (DRYYAVCDPLRYKAKIN) lie on the Cytoplasmic side of the membrane. The helical transmembrane segment at 136 to 156 (ILVVCVMIFISWSVPAVFAFG) threads the bilayer. Residues 157 to 187 (MIFLELNFKGAEEIYYKHVHCRGGCSVFFSK) are Extracellular-facing. The helical transmembrane segment at 188–208 (ISGVLAFMTSFYIPGSIMLCI) threads the bilayer. The Cytoplasmic portion of the chain corresponds to 209–251 (YYRIYLIAKEQARSINDANQKLQIGLEMKNGISQSKERKAVKT). The helical transmembrane segment at 252-272 (LGIVMGVFLICWCPFFVCTVI) threads the bilayer. Residues 273 to 286 (DPFLHYTIPPTLND) are Extracellular-facing. The helical transmembrane segment at 287 to 307 (VLIWFGYLNSTFNPMVYAFFY) threads the bilayer. Topologically, residues 308 to 338 (PWFRKALKMILFGKIFQKDSSRCKLFLESSS) are cytoplasmic.

It belongs to the G-protein coupled receptor 1 family.

Its subcellular location is the endomembrane system. It localises to the endoplasmic reticulum membrane. It is found in the cell membrane. Intracellular G-protein coupled receptor for trace amines, which recognizes endogenous amine-containing metabolites such as beta-phenylethylamine (beta-PEA), 3-iodothyronamine (T1AM), isoamylamine (IAA), cadaverine (CAD), cyclohexylamine (CHA), p-tyramine (p-TYR), trimethylamine (TMA), octopamine and tryptamine. Also functions as a receptor for various drugs and psychoactive substances, such as amphetamine and methamphetamine. Unresponsive to classical biogenic amines, such as epinephrine and histamine and only partially activated by dopamine and serotonin. Expressed in both the central and peripheral nervous system: TAAR1 activation regulates the activity of several neurotransmitter signaling pathways by (1) decreasing the basal firing rates of the neurons involved and by (2) lowering the sensitivity of receptors to neurotransmitters. Ligand binding causes a conformation change that triggers signaling via guanine nucleotide-binding proteins (G proteins) and modulates the activity of downstream effectors. TAAR1 is coupled with different G(i)/G(o)-, G(s)- or G(q)/G(11) classes of G alpha proteins depending on the ligand. CAD-binding is coupled to G(i)/G(o) G alpha proteins and mediates inhibition of adenylate cyclase activity. T1AM- or beta-PEA-binding is coupled to G(s) G alpha proteins and mediates activation of adenylate cyclase activity. CHA- or IAA-binding is coupled to G(q)/G(11) G alpha proteins and activates phospholipase C-beta, releasing diacylglycerol (DAG) and inositol 1,4,5-trisphosphate (IP3) second messengers. TMA-binding is coupled with all three G(i)/G(o)-, G(s)- or G(q)/G(11) G alpha protein subtypes. This is Trace amine-associated receptor 1 (TAAR1) from Macaca mulatta (Rhesus macaque).